The sequence spans 88 residues: Small ribosomal subunit protein bS20 (88 aa).

Disordered stretches follow at residues 1 to 29 (MANT…SKLR) and 69 to 88 (KNTA…AMAA).

It belongs to the bacterial ribosomal protein bS20 family.

Its function is as follows. Binds directly to 16S ribosomal RNA. This is Small ribosomal subunit protein bS20 from Polynucleobacter asymbioticus (strain DSM 18221 / CIP 109841 / QLW-P1DMWA-1) (Polynucleobacter necessarius subsp. asymbioticus).